The primary structure comprises 458 residues: Purple acid phosphatase 23 (458 aa).

Positions 1 to 19 (MTLLIMITLTSISLLLAAA) are cleaved as a signal peptide. N-linked (GlcNAc...) asparagine glycans are attached at residues N59, N121, and N136. D194 provides a ligand contact to Fe cation. The N-linked (GlcNAc...) asparagine glycan is linked to N200. Fe cation contacts are provided by D221 and Y224. D221 is a Mn(2+) binding site. N278 serves as a coordination point for Mn(2+). N278 provides a ligand contact to substrate. N331 is a glycosylation site (N-linked (GlcNAc...) asparagine). Position 360 (H360) interacts with Mn(2+). H370 functions as the Proton donor in the catalytic mechanism. Mn(2+) is bound at residue H397. 397–399 (HVH) contributes to the substrate binding site. H399 contributes to the Fe cation binding site. N409 and N455 each carry an N-linked (GlcNAc...) asparagine glycan.

The protein belongs to the metallophosphoesterase superfamily. Purple acid phosphatase family. As to quaternary structure, homodimer. Requires Fe cation as cofactor. Mn(2+) is required as a cofactor. As to expression, specifically expressed in flowers.

It localises to the secreted. It carries out the reaction a phosphate monoester + H2O = an alcohol + phosphate. In terms of biological role, acid phosphatase activity with ATP, ADP, dATP, pyrophosphate, polyphosphate, phosphoserine and phosphothreonine. Low or no activity with phosphotyrosine, AMP and phytate. This Arabidopsis thaliana (Mouse-ear cress) protein is Purple acid phosphatase 23 (PAP23).